The sequence spans 364 residues: Anhydro-N-acetylmuramic acid kinase (364 aa).

11–18 (GSSLDGID) serves as a coordination point for ATP.

Belongs to the anhydro-N-acetylmuramic acid kinase family.

It carries out the reaction 1,6-anhydro-N-acetyl-beta-muramate + ATP + H2O = N-acetyl-D-muramate 6-phosphate + ADP + H(+). It participates in amino-sugar metabolism; 1,6-anhydro-N-acetylmuramate degradation. The protein operates within cell wall biogenesis; peptidoglycan recycling. In terms of biological role, catalyzes the specific phosphorylation of 1,6-anhydro-N-acetylmuramic acid (anhMurNAc) with the simultaneous cleavage of the 1,6-anhydro ring, generating MurNAc-6-P. Is required for the utilization of anhMurNAc either imported from the medium or derived from its own cell wall murein, and thus plays a role in cell wall recycling. The sequence is that of Anhydro-N-acetylmuramic acid kinase from Pseudomonas syringae pv. syringae (strain B728a).